Consider the following 326-residue polypeptide: Transcription factor bHLH143 (326 aa).

Positions 175–189 are enriched in acidic residues; it reads SDDDDNDDWESDDEV. Disordered stretches follow at residues 175–194 and 234–275; these read SDDDDNDDWESDDEVMSTGH and RDSS…EQSR. Positions 255–271 are enriched in polar residues; that stretch reads PESNISSKQETGSGLSD. Residues 263–312 form the bHLH domain; it reads QETGSGLSDEQSRKDKIHTALRILESVVPGAKGKEALLLLDEAIDYLKLL.

Homodimer.

It is found in the nucleus. The polypeptide is Transcription factor bHLH143 (BHLH143) (Arabidopsis thaliana (Mouse-ear cress)).